Here is a 179-residue protein sequence, read N- to C-terminus: MSIENLKNSLPEYAKDLKLNLSSIARSTVLNEQQLWGTLLASAAATRSATTLREIAEEAADVLSAEAYNAALGAASIMGMNNVFYRGKAFLGGRYDDLRAGLRMQIIGNPGVDKADFELWSFAVSSINGCAHCLEAHEHTLREAGVSREVIFESLRVAAIVAGVGQAVQSTEALAAAAV.

The active-site Proton donor is Cys130. Cys130 and Cys133 are oxidised to a cystine. The active-site Cysteine sulfenic acid (-SOH) intermediate is Cys133.

Belongs to the AhpD family. Homotrimer.

It carries out the reaction N(6)-[(R)-dihydrolipoyl]-L-lysyl-[lipoyl-carrier protein] + a hydroperoxide = N(6)-[(R)-lipoyl]-L-lysyl-[lipoyl-carrier protein] + an alcohol + H2O. In terms of biological role, antioxidant protein with alkyl hydroperoxidase activity. Required for the reduction of the AhpC active site cysteine residues and for the regeneration of the AhpC enzyme activity. This Nocardia farcinica (strain IFM 10152) protein is Alkyl hydroperoxide reductase AhpD.